The following is a 329-amino-acid chain: Malate dehydrogenase (329 aa).

G12–G18 lines the NAD(+) pocket. Substrate is bound by residues R93 and R99. NAD(+)-binding positions include N106, Q113, and T130 to N132. N132 and R163 together coordinate substrate. The Proton acceptor role is filled by H188.

Belongs to the LDH/MDH superfamily. MDH type 2 family.

The enzyme catalyses (S)-malate + NAD(+) = oxaloacetate + NADH + H(+). Catalyzes the reversible oxidation of malate to oxaloacetate. The chain is Malate dehydrogenase from Mycobacterium avium (strain 104).